The chain runs to 459 residues: DNA damage-inducible protein F (459 aa).

Transmembrane regions (helical) follow at residues 2-22 (PPGV…MAFL), 29-49 (LWHL…LGLV), 63-83 (LGGV…LLFL), 111-131 (LLLA…IIDL), 154-174 (WLSA…LGVQ), 180-200 (VILL…LVMG), 207-227 (GAAL…LLMV), 265-285 (LLQL…SDII), 289-309 (AVLM…AYAV), 338-358 (IVAL…IALL), 373-393 (IWQV…GMFI), and 416-436 (LLTL…VFLA).

The protein belongs to the multi antimicrobial extrusion (MATE) (TC 2.A.66.1) family.

It localises to the cell inner membrane. This is DNA damage-inducible protein F (dinF) from Escherichia coli (strain K12).